Reading from the N-terminus, the 513-residue chain is Light-independent protochlorophyllide reductase subunit B (513 aa).

Asp-36 is a [4Fe-4S] cluster binding site. The active-site Proton donor is the Asp-299. Substrate is bound at residue 434 to 435; that stretch reads GM.

It belongs to the ChlB/BchB/BchZ family. Protochlorophyllide reductase is composed of three subunits; ChlL, ChlN and ChlB. Forms a heterotetramer of two ChlB and two ChlN subunits. It depends on [4Fe-4S] cluster as a cofactor.

It is found in the plastid. It localises to the chloroplast. It catalyses the reaction chlorophyllide a + oxidized 2[4Fe-4S]-[ferredoxin] + 2 ADP + 2 phosphate = protochlorophyllide a + reduced 2[4Fe-4S]-[ferredoxin] + 2 ATP + 2 H2O. It participates in porphyrin-containing compound metabolism; chlorophyll biosynthesis (light-independent). Functionally, component of the dark-operative protochlorophyllide reductase (DPOR) that uses Mg-ATP and reduced ferredoxin to reduce ring D of protochlorophyllide (Pchlide) to form chlorophyllide a (Chlide). This reaction is light-independent. The NB-protein (ChlN-ChlB) is the catalytic component of the complex. The polypeptide is Light-independent protochlorophyllide reductase subunit B (Zygnema circumcarinatum (Green alga)).